A 454-amino-acid chain; its full sequence is tRNA modification GTPase MnmE (454 aa).

Residues Arg-23, Glu-80, and Lys-120 each contribute to the (6S)-5-formyl-5,6,7,8-tetrahydrofolate site. In terms of domain architecture, TrmE-type G spans 216-377; sequence GMKVVIAGRP…LRNHLKQSMG (162 aa). A K(+)-binding site is contributed by Asn-226. GTP contacts are provided by residues 226 to 231, 245 to 251, 270 to 273, 335 to 338, and 358 to 360; these read NAGKSS, TDIAGTT, DTAG, NKAD, and SAR. Ser-230 lines the Mg(2+) pocket. K(+) is bound by residues Thr-245, Ile-247, and Thr-250. A Mg(2+)-binding site is contributed by Thr-251. (6S)-5-formyl-5,6,7,8-tetrahydrofolate is bound at residue Lys-454.

This sequence belongs to the TRAFAC class TrmE-Era-EngA-EngB-Septin-like GTPase superfamily. TrmE GTPase family. In terms of assembly, homodimer. Heterotetramer of two MnmE and two MnmG subunits. K(+) is required as a cofactor.

Its subcellular location is the cytoplasm. Its function is as follows. Exhibits a very high intrinsic GTPase hydrolysis rate. Involved in the addition of a carboxymethylaminomethyl (cmnm) group at the wobble position (U34) of certain tRNAs, forming tRNA-cmnm(5)s(2)U34. The polypeptide is tRNA modification GTPase MnmE (Salmonella typhimurium (strain LT2 / SGSC1412 / ATCC 700720)).